We begin with the raw amino-acid sequence, 320 residues long: Ferrochelatase (320 aa).

Residues histidine 194 and glutamate 275 each coordinate Fe cation.

It belongs to the ferrochelatase family. In terms of assembly, monomer.

It localises to the cytoplasm. It catalyses the reaction heme b + 2 H(+) = protoporphyrin IX + Fe(2+). The protein operates within porphyrin-containing compound metabolism; protoheme biosynthesis; protoheme from protoporphyrin-IX: step 1/1. Catalyzes the ferrous insertion into protoporphyrin IX. This Salmonella paratyphi A (strain ATCC 9150 / SARB42) protein is Ferrochelatase.